The chain runs to 606 residues: Proline--tRNA ligase (606 aa).

It belongs to the class-II aminoacyl-tRNA synthetase family. ProS type 1 subfamily. In terms of assembly, homodimer.

It localises to the cytoplasm. It carries out the reaction tRNA(Pro) + L-proline + ATP = L-prolyl-tRNA(Pro) + AMP + diphosphate. In terms of biological role, catalyzes the attachment of proline to tRNA(Pro) in a two-step reaction: proline is first activated by ATP to form Pro-AMP and then transferred to the acceptor end of tRNA(Pro). As ProRS can inadvertently accommodate and process non-cognate amino acids such as alanine and cysteine, to avoid such errors it has two additional distinct editing activities against alanine. One activity is designated as 'pretransfer' editing and involves the tRNA(Pro)-independent hydrolysis of activated Ala-AMP. The other activity is designated 'posttransfer' editing and involves deacylation of mischarged Ala-tRNA(Pro). The misacylated Cys-tRNA(Pro) is not edited by ProRS. The sequence is that of Proline--tRNA ligase from Kocuria rhizophila (strain ATCC 9341 / DSM 348 / NBRC 103217 / DC2201).